The chain runs to 163 residues: Large ribosomal subunit protein uL10 (163 aa).

This sequence belongs to the universal ribosomal protein uL10 family. Part of the ribosomal stalk of the 50S ribosomal subunit. The N-terminus interacts with L11 and the large rRNA to form the base of the stalk. The C-terminus forms an elongated spine to which L12 dimers bind in a sequential fashion forming a multimeric L10(L12)X complex.

In terms of biological role, forms part of the ribosomal stalk, playing a central role in the interaction of the ribosome with GTP-bound translation factors. The polypeptide is Large ribosomal subunit protein uL10 (Histophilus somni (strain 2336) (Haemophilus somnus)).